The chain runs to 349 residues: Small ribosomal subunit protein uS2 (349 aa).

It belongs to the universal ribosomal protein uS2 family.

This is Small ribosomal subunit protein uS2 from Methylobacterium sp. (strain 4-46).